We begin with the raw amino-acid sequence, 602 residues long: MNANNLLQAAIFIVVLIAAAVPVARYLTRVMDGSSAVVRVFGPLERALYRFAGIDPRTEMSWKQYALATVAFNALGVLFLYALLRVQGWLPGNPQGFGPMTVDGALNTAVSFVTNTNWQDYTPEQTVSYLAQMLGLTVQNFLSAATGIVVVLALIRGFARHTAQTIGNFWVDVTRVTLYVLVPMAAIIAALLMSQGVIQNTKAYQDVPTLQTTSYAAPRLDAQGNPVKDAKGNPVTVQTSVKAQTLAMGPVASQEAIKMLGTNGGGFFNGNSSHPYENPTPFSNFLEIFAILIIPAALCLVFGNTIGDRRQGVAVLAAMTVALAAAIGIETSAEQGGTPVLASLNVDLAASPLQAGGNMEGKETRFGIAQTGLFVVATTAASCGAVDAMHDSLTPVGGLVPMLLMQLGEVIFGGVGSGLYGMLVFALLAVFVAGLMIGRTPEYVGKKIESYEMKMVSIVVLLTPLLVLVGTSIAVLADAGRAGIANPGPHGFSEILYAFSSAANNNGSAFGGLSVNTPFYNWMTAIAMWFGRFGTIVPVLAIAGSLAAKKRIAATSGTLPTHGPLFVVLLLGTVLLVGALTYMPALALGPGVEHLMLFVGAH.

Helical transmembrane passes span 3-23, 64-84, 135-155, 178-198, 282-302, 313-333, 418-438, 456-476, 522-542, and 565-585; these read ANNL…AVPV, QYAL…YALL, GLTV…LALI, LYVL…QGVI, FSNF…CLVF, VAVL…ETSA, GLYG…LMIG, VSIV…IAVL, WMTA…VLAI, and LFVV…YMPA.

This sequence belongs to the KdpA family. As to quaternary structure, the system is composed of three essential subunits: KdpA, KdpB and KdpC.

It localises to the cell inner membrane. Functionally, part of the high-affinity ATP-driven potassium transport (or Kdp) system, which catalyzes the hydrolysis of ATP coupled with the electrogenic transport of potassium into the cytoplasm. This subunit binds the periplasmic potassium ions and delivers the ions to the membrane domain of KdpB through an intramembrane tunnel. The chain is Potassium-transporting ATPase potassium-binding subunit from Burkholderia pseudomallei (strain K96243).